Reading from the N-terminus, the 299-residue chain is NAD kinase (299 aa).

Aspartate 71 acts as the Proton acceptor in catalysis. NAD(+) contacts are provided by residues 71–72 (DG), 145–146 (ND), arginine 173, aspartate 175, 186–191 (TAYSLS), alanine 210, and glutamine 248.

It belongs to the NAD kinase family. A divalent metal cation is required as a cofactor.

Its subcellular location is the cytoplasm. The catalysed reaction is NAD(+) + ATP = ADP + NADP(+) + H(+). Involved in the regulation of the intracellular balance of NAD and NADP, and is a key enzyme in the biosynthesis of NADP. Catalyzes specifically the phosphorylation on 2'-hydroxyl of the adenosine moiety of NAD to yield NADP. The chain is NAD kinase from Bordetella pertussis (strain Tohama I / ATCC BAA-589 / NCTC 13251).